We begin with the raw amino-acid sequence, 354 residues long: UDP-N-acetylglucosamine--N-acetylmuramyl-(pentapeptide) pyrophosphoryl-undecaprenol N-acetylglucosamine transferase (354 aa).

Residues 15-17 (TGG), Asn-127, Arg-163, Ser-191, Ile-242, 261-266 (ALTVSE), and Gln-286 contribute to the UDP-N-acetyl-alpha-D-glucosamine site.

Belongs to the glycosyltransferase 28 family. MurG subfamily.

The protein localises to the cell inner membrane. The catalysed reaction is di-trans,octa-cis-undecaprenyl diphospho-N-acetyl-alpha-D-muramoyl-L-alanyl-D-glutamyl-meso-2,6-diaminopimeloyl-D-alanyl-D-alanine + UDP-N-acetyl-alpha-D-glucosamine = di-trans,octa-cis-undecaprenyl diphospho-[N-acetyl-alpha-D-glucosaminyl-(1-&gt;4)]-N-acetyl-alpha-D-muramoyl-L-alanyl-D-glutamyl-meso-2,6-diaminopimeloyl-D-alanyl-D-alanine + UDP + H(+). It participates in cell wall biogenesis; peptidoglycan biosynthesis. Cell wall formation. Catalyzes the transfer of a GlcNAc subunit on undecaprenyl-pyrophosphoryl-MurNAc-pentapeptide (lipid intermediate I) to form undecaprenyl-pyrophosphoryl-MurNAc-(pentapeptide)GlcNAc (lipid intermediate II). This is UDP-N-acetylglucosamine--N-acetylmuramyl-(pentapeptide) pyrophosphoryl-undecaprenol N-acetylglucosamine transferase from Pasteurella multocida (strain Pm70).